The primary structure comprises 475 residues: 3-hydroxyadipyl-CoA dehydrogenase (475 aa).

Belongs to the 3-hydroxyacyl-CoA dehydrogenase family. Homotrimer.

It catalyses the reaction (3S)-3-hydroxyadipyl-CoA + NAD(+) = 3-oxoadipyl-CoA + NADH + H(+). It functions in the pathway aromatic compound metabolism; phenylacetate degradation. Its function is as follows. Catalyzes the oxidation of 3-hydroxyadipyl-CoA to yield 3-oxoadipyl-CoA. This Escherichia coli (strain K12) protein is 3-hydroxyadipyl-CoA dehydrogenase (paaH).